We begin with the raw amino-acid sequence, 550 residues long: Parathyroid hormone 2 receptor (550 aa).

An N-terminal signal peptide occupies residues M1–A24. Residues D27 to Y145 are Extracellular-facing. N51, N106, N116, and N121 each carry an N-linked (GlcNAc...) asparagine glycan. Residues V146–F169 form a helical membrane-spanning segment. The Cytoplasmic portion of the chain corresponds to R170 to R176. Residues N177–V196 traverse the membrane as a helical segment. Residues K197–K237 lie on the Extracellular side of the membrane. A helical membrane pass occupies residues I238 to Y260. Residues L261–Y275 lie on the Cytoplasmic side of the membrane. Residues L276 to A297 form a helical membrane-spanning segment. The Extracellular segment spans residues R298–W316. A helical transmembrane segment spans residues I317 to V337. At R338–S364 the chain is on the cytoplasmic side. The chain crosses the membrane as a helical span at residues T365–P383. Residues H384–R394 lie on the Extracellular side of the membrane. The chain crosses the membrane as a helical span at residues M395–N417. The Cytoplasmic portion of the chain corresponds to G418–L550. The span at E511–R531 shows a compositional bias: basic and acidic residues. The interval E511–L550 is disordered.

Belongs to the G-protein coupled receptor 2 family. As to quaternary structure, binds to TIPF39/TIP39. As to expression, expressed abundantly in brain and pancreas. Also expressed in the testis.

The protein resides in the cell membrane. Functionally, this is a specific receptor for parathyroid hormone. The activity of this receptor is mediated by G proteins which activate adenylyl cyclase. PTH2R may be responsible for PTH effects in a number of physiological systems. It may play a significant role in pancreatic function. PTH2R presence in neurons indicates that it may function as a neurotransmitter receptor. This chain is Parathyroid hormone 2 receptor (PTH2R), found in Homo sapiens (Human).